An 831-amino-acid chain; its full sequence is MDIFDSTITSFEDFPSERFKEQLESLTYESIERASQFVLENLPCIDDLFDVLLNRMRKSAYHKRLLFFNLIDCICIGCSRIENDVYKKFIINNVDEIIPLILPDDNLEVKKKNRETIERIIRSWSNNHVFNDTFISRAFSILSGVAKESRSICPNLSEKEIARLLKRMEEKRKDQNKKRLDLEDSHPLDEFLELWFNFNLDNSSSSSSSSSSSSSSSSTTTTTTTTSELSSISTSLNSIRTNSSCSNNNLQIDIEIIEKEKEKQKEHFNSFNDTSITTPSTSSSTTSSSSSSSSSSSSSSSSSSSSSSSSSSSSSSSSSSSSSSSSSSLDNSTTNDNNNNTSNNKNNNNDNYNNQSILEKERIYKLDYEVYDSFKSQFTIPEWPSYEIEDIDLFTSGNDGEYQDYIENEYNSFDQNSYLEYKKKYKNNEFENSIGNSNNYYNRNSSNNNNNNNNNNNNNNNNNNNNNNNNNNNNNNNEDSGNFMNSILNYCFYEHKNHFNFIKNNRNNHYPYNTSGYLNNRVDNYQPYSPKTTSDSHKLQEYFNKIDYMNKNGISVVDICAKSKSFEIPNICGADGGDSDRMDIDTNNSLKNENKQNDSHRGKSRKRRSSSRGESEHSRYYRDSSRDAKDRDSRDHRDNRDHRDSRDHRDRRDSRDHRDSRDYRDHRDSRDYRDSRDSRDSRDSRDRESRDSRDHRESRDSRDHRESRDSREYRESRDHRDHSRDSRDQYRDKDHRDSSDGRDHRNRDDKYQIDKRDNQHHNERNDSRNDRNDKNDKNDKNDKNDKNQEKYSERYHNERDSRDNEKDFYRSKETMVNNDNRSSSNRSSNRH.

One can recognise a CID domain in the interval 1–146 (MDIFDSTITS…RAFSILSGVA (146 aa)). Disordered regions lie at residues 205-233 (SSSS…SSIS), 265-354 (KEHF…NYNN), 434-480 (IGNS…NEDS), and 572-831 (CGAD…SNRH). 2 stretches are compositionally biased toward low complexity: residues 272–354 (NDTS…NYNN) and 434–477 (IGNS…NNNN). 2 stretches are compositionally biased toward basic and acidic residues: residues 592–601 (NENKQNDSHR) and 611–813 (SRGE…RSKE). The span at 817-831 (NNDNRSSSNRSSNRH) shows a compositional bias: low complexity.

This is an uncharacterized protein from Dictyostelium discoideum (Social amoeba).